The primary structure comprises 450 residues: MKTVTEFQNKNILVLGIAKSGYAAATLLQKLGANVIVNDGKPLAENVLAAELQAKGMDVVCGGHPLELLERNISLVVKNPGIPYSNPILVAAKEKQIPIVTEVELAYRISEAPFVGITGSNGKTTTTMLTFEMLKEGQKHPVIAGNIGTVACEVAQDAKENEVVVTELSSFQLMGVELFQPKIAAFLNLFEAHLDYHGTKKEYGLAKANIFKNXTENDYSVINADDADVMALSAYSKGQKVLFSTTKEIEDGACIKDNALYFKGEKVVEVGDIVLPGQHNLENILAAMSIAKLLGVSNEAITAVLKRFTGVKHRLEYVTTINNRKFYNDSKATNMLATEKALSAFTQPTVLLAGGLDRGNEFDDLIPYFKNVKAIVTFGQTAPKLVRAAEKAGLDTIESVDTLDEAVVKAYAHSTDGDVILLSPACASWDQFKTFEERGDIFIQAVHKLI.

Position 119–125 (119–125 (GSNGKTT)) interacts with ATP.

The protein belongs to the MurCDEF family.

It is found in the cytoplasm. It carries out the reaction UDP-N-acetyl-alpha-D-muramoyl-L-alanine + D-glutamate + ATP = UDP-N-acetyl-alpha-D-muramoyl-L-alanyl-D-glutamate + ADP + phosphate + H(+). The protein operates within cell wall biogenesis; peptidoglycan biosynthesis. In terms of biological role, cell wall formation. Catalyzes the addition of glutamate to the nucleotide precursor UDP-N-acetylmuramoyl-L-alanine (UMA). The sequence is that of UDP-N-acetylmuramoylalanine--D-glutamate ligase from Bacillus cereus (strain ATCC 10987 / NRS 248).